The following is a 372-amino-acid chain: Tyrosine--tRNA ligase 1 (372 aa).

Positions 37, 169, 173, 176, and 191 each coordinate L-tyrosine. The 'KMSKS' region motif lies at 246–250 (KMSKS). Residue Lys249 participates in ATP binding.

It belongs to the class-I aminoacyl-tRNA synthetase family. TyrS type 4 subfamily. Homodimer.

The protein localises to the cytoplasm. The enzyme catalyses tRNA(Tyr) + L-tyrosine + ATP = L-tyrosyl-tRNA(Tyr) + AMP + diphosphate + H(+). Catalyzes the attachment of tyrosine to tRNA(Tyr) in a two-step reaction: tyrosine is first activated by ATP to form Tyr-AMP and then transferred to the acceptor end of tRNA(Tyr). The sequence is that of Tyrosine--tRNA ligase 1 from Pyrobaculum aerophilum (strain ATCC 51768 / DSM 7523 / JCM 9630 / CIP 104966 / NBRC 100827 / IM2).